The chain runs to 243 residues: MATIDLQKKSVKIVLEKKQLTKVTARVGLVLDITGSMRPLYKNGTVQNVVERILAVADQFDDNGLLDVWVYDNEFSRLKPVSEKDFSGYVDREILNNDRLHKFGRNDEPPVMKDVLRKYVTEEPSSYPAFIVFINDGGCKKSIKPIIEASSDKPVFWQFVGIGNGNFDFLNKLDTLEGRVIDNTNFLHIEEIDRISDDELYDALLAEFPFWLKEAKEKGIVREQEPPAEKPKKKGFFSRLFSK.

A VWFA domain is found at arginine 26 to leucine 204. The interval arginine 222–lysine 243 is disordered. Basic residues predominate over residues proline 231–lysine 243.

This is an uncharacterized protein from Bacillus subtilis (strain 168).